A 539-amino-acid chain; its full sequence is Fusion glycoprotein F0 (539 aa).

An N-terminal signal peptide occupies residues 1-18 (MSWKVVIIFSLLITPQHG). Disulfide bonds link cysteine 28-cysteine 407, cysteine 60-cysteine 182, cysteine 283-cysteine 311, cysteine 292-cysteine 301, cysteine 326-cysteine 335, cysteine 350-cysteine 361, and cysteine 384-cysteine 390. A glycan (N-linked (GlcNAc...) asparagine; by host) is linked at asparagine 57. The fusion peptide stretch occupies residues 103–127 (FVLGAIALGVATAAAVTAGVAIAKT). A glycan (N-linked (GlcNAc...) asparagine; by host) is linked at asparagine 172. A Cell attachment site motif is present at residues 329–331 (RGD). The N-linked (GlcNAc...) asparagine; by host glycan is linked to asparagine 353. A helical membrane pass occupies residues 492–512 (IIVIILIAVLGSSMILVSIFI). A disordered region spans residues 520–539 (PTGAPPELSGVTNNGFIPHS). The span at 529 to 539 (GVTNNGFIPHS) shows a compositional bias: polar residues.

It belongs to the paramyxoviruses fusion glycoprotein family. In terms of assembly, homotrimer. Heterodimer with fusion protein F2; disulfide-linked. As a heterodimer with F2, interacts with host heparan sulfate. As a heterodimer with F2, interacts with host integrin ITGAV/ITGB1. Part of a complex composed of F1, F2 and G glycoproteins. As to quaternary structure, homotrimer. Heterodimer with fusion protein F1; disulfide-linked. As a heterodimer with F1, interacts with host heparan sulfate. As a heterodimer with F2, interacts with host integrin ITGAV/ITGB1. Part of a complex composed of F1, F2 and G glycoproteins. Post-translationally, the F glycoprotein is synthesized as a F0 inactive precursor that is heavily N-glycosylated and processed.

Its subcellular location is the virion membrane. The protein localises to the host cell membrane. Functionally, inactive precursor that is cleaved to give rise to the mature F1 and F2 fusion glycoproteins. Class I viral fusion protein. Under the current model, the protein has at least 3 conformational states: pre-fusion native state, pre-hairpin intermediate state, and post-fusion hairpin state. During viral and plasma cell membrane fusion, the coiled coil regions assume a trimer-of-hairpins structure, positioning the fusion peptide in close proximity to the C-terminal region of the ectodomain. The formation of this structure appears to drive apposition and subsequent fusion of viral and cellular membranes leading to delivery of the nucleocapsid into the cytoplasm. This fusion is pH independent and occurs at the plasma or endosomal membrane. The trimer of F1-F2 (F protein) also facilitates the attachment to host cell by binding to host heparan sulfate. In terms of biological role, major determinant of the species specificity of RSV infection. The trimer of F1-F2 (F protein) also facilitates the attachment to host cell by binding to host heparan sulfate. This chain is Fusion glycoprotein F0 (F), found in Human metapneumovirus (strain CAN97-83) (HMPV).